A 54-amino-acid polypeptide reads, in one-letter code: ATP synthase F(0) complex subunit 8 (54 aa).

Residues 4-24 (LNPGPWFAILVFSWLIFLTII) form a helical membrane-spanning segment. The disordered stretch occupies residues 35–54 (NEPTPVSAEKHKTESWDWPW). Positions 42-54 (AEKHKTESWDWPW) are enriched in basic and acidic residues.

It belongs to the ATPase protein 8 family. As to quaternary structure, component of the ATP synthase complex composed at least of ATP5F1A/subunit alpha, ATP5F1B/subunit beta, ATP5MC1/subunit c (homooctomer), MT-ATP6/subunit a, MT-ATP8/subunit 8, ATP5ME/subunit e, ATP5MF/subunit f, ATP5MG/subunit g, ATP5MK/subunit k, ATP5MJ/subunit j, ATP5F1C/subunit gamma, ATP5F1D/subunit delta, ATP5F1E/subunit epsilon, ATP5PF/subunit F6, ATP5PB/subunit b, ATP5PD/subunit d, ATP5PO/subunit OSCP. ATP synthase complex consists of a soluble F(1) head domain (subunits alpha(3) and beta(3)) - the catalytic core - and a membrane F(0) domain - the membrane proton channel (subunits c, a, 8, e, f, g, k and j). These two domains are linked by a central stalk (subunits gamma, delta, and epsilon) rotating inside the F1 region and a stationary peripheral stalk (subunits F6, b, d, and OSCP).

The protein resides in the mitochondrion membrane. Functionally, subunit 8, of the mitochondrial membrane ATP synthase complex (F(1)F(0) ATP synthase or Complex V) that produces ATP from ADP in the presence of a proton gradient across the membrane which is generated by electron transport complexes of the respiratory chain. ATP synthase complex consist of a soluble F(1) head domain - the catalytic core - and a membrane F(1) domain - the membrane proton channel. These two domains are linked by a central stalk rotating inside the F(1) region and a stationary peripheral stalk. During catalysis, ATP synthesis in the catalytic domain of F(1) is coupled via a rotary mechanism of the central stalk subunits to proton translocation. In vivo, can only synthesize ATP although its ATP hydrolase activity can be activated artificially in vitro. Part of the complex F(0) domain. This chain is ATP synthase F(0) complex subunit 8, found in Cyprinus carpio (Common carp).